The primary structure comprises 296 residues: Peroxidase P7 (296 aa).

Gln-1 carries the pyrrolidone carboxylic acid modification. 4 disulfides stabilise this stretch: Cys-11-Cys-91, Cys-44-Cys-49, Cys-97-Cys-292, and Cys-176-Cys-201. Residue His-42 is the Proton acceptor of the active site. Asp-43, Val-46, Gly-48, Asp-50, and Ser-52 together coordinate Ca(2+). Pro-139 lines the substrate pocket. His-169 is a heme b binding site. Ca(2+) is bound at residue Thr-170. The N-linked (GlcNAc...) asparagine glycan is linked to Asn-185. Residues Asp-216, Ser-219, and Asp-224 each coordinate Ca(2+).

It belongs to the peroxidase family. Classical plant (class III) peroxidase subfamily. It depends on Ca(2+) as a cofactor. Heme b serves as cofactor.

The catalysed reaction is 2 a phenolic donor + H2O2 = 2 a phenolic radical donor + 2 H2O. Its function is as follows. Removal of H(2)O(2), oxidation of toxic reductants, biosynthesis and degradation of lignin, suberization, auxin catabolism, response to environmental stresses such as wounding, pathogen attack and oxidative stress. These functions might be dependent on each isozyme/isoform in each plant tissue. In Brassica rapa subsp. rapa (Turnip), this protein is Peroxidase P7.